A 128-amino-acid polypeptide reads, in one-letter code: 3-aminoacrylate deaminase RutC (128 aa).

Belongs to the RutC family. Homotrimer.

It carries out the reaction (Z)-3-aminoacrylate + H2O + H(+) = 3-oxopropanoate + NH4(+). Functionally, involved in pyrimidine catabolism. Catalyzes the deamination of 3-aminoacrylate to malonic semialdehyde, a reaction that can also occur spontaneously. RutC may facilitate the reaction and modulate the metabolic fitness, rather than catalyzing essential functions. The protein is 3-aminoacrylate deaminase RutC of Escherichia coli (strain SE11).